The following is a 345-amino-acid chain: Protein-arginine kinase (345 aa).

One can recognise a Phosphagen kinase C-terminal domain in the interval 15-245 (LVISSRIRLA…LQIINQEIIS (231 aa)). ATP contacts are provided by residues 18 to 22 (SSRIR), His-82, Arg-116, 167 to 171 (RASVM), and 198 to 203 (RGLYGE). Positions 328–333 (RDFNRA) match the RDXXRA motif of the pArg binding pocket involved in allosteric regulation motif.

The protein belongs to the ATP:guanido phosphotransferase family.

It catalyses the reaction L-arginyl-[protein] + ATP = N(omega)-phospho-L-arginyl-[protein] + ADP + H(+). Its activity is regulated as follows. Appears to be allosterically activated by the binding of pArg-containing polypeptides to the pArg-binding pocket localized in the C-terminal domain of McsB. In terms of biological role, catalyzes the specific phosphorylation of arginine residues in proteins. This is Protein-arginine kinase from Clostridium kluyveri (strain NBRC 12016).